We begin with the raw amino-acid sequence, 287 residues long: Small ribosomal subunit biogenesis GTPase RsgA (287 aa).

Residues 61–218 form the CP-type G domain; sequence SSELIRPTVA…LVDTPGFTTL (158 aa). Residues 110-113 and 161-169 contribute to the GTP site; these read NKED and GPSGAGKST. Residues cysteine 242, cysteine 247, histidine 249, and cysteine 255 each contribute to the Zn(2+) site.

It belongs to the TRAFAC class YlqF/YawG GTPase family. RsgA subfamily. As to quaternary structure, monomer. Associates with 30S ribosomal subunit, binds 16S rRNA. It depends on Zn(2+) as a cofactor.

The protein localises to the cytoplasm. Its function is as follows. One of several proteins that assist in the late maturation steps of the functional core of the 30S ribosomal subunit. Helps release RbfA from mature subunits. May play a role in the assembly of ribosomal proteins into the subunit. Circularly permuted GTPase that catalyzes slow GTP hydrolysis, GTPase activity is stimulated by the 30S ribosomal subunit. The protein is Small ribosomal subunit biogenesis GTPase RsgA of Clostridium perfringens (strain ATCC 13124 / DSM 756 / JCM 1290 / NCIMB 6125 / NCTC 8237 / Type A).